A 170-amino-acid chain; its full sequence is Transmembrane protein 252 (170 aa).

2 helical membrane passes run 8 to 28 (ILCALALLMGFLMVCLGAFFI) and 40 to 60 (LIAAYLLLPLGFVILLSGIFW). The segment at 112-147 (CPAEREASGIPPPLYTETGLEFQDGNDSHPEAPPSY) is disordered.

The protein resides in the membrane. In Homo sapiens (Human), this protein is Transmembrane protein 252 (TMEM252).